Consider the following 681-residue polypeptide: Transcriptional regulator prz1 (681 aa).

Residues 1-15 (MERQRSEEANRRFKD) show a composition bias toward basic and acidic residues. Disordered regions lie at residues 1 to 29 (MERQ…SKPD), 66 to 96 (NPSK…DSYP), 340 to 372 (SHQS…NSPF), 410 to 433 (PQIN…ANPL), and 520 to 563 (KIEN…AKSE). Polar residues-rich tracts occupy residues 66 to 86 (NPSK…FKTS) and 340 to 358 (SHQS…LNSE). Residues 416–428 (PSSPSKSQSGPSL) show a composition bias toward low complexity. Over residues 528–549 (SNDYLSVRNTRPRSRSLNSLVG) the composition is skewed to polar residues. Phosphoserine is present on residues Ser543 and Ser546. Residues 550-559 (NKSENSSSSK) show a composition bias toward low complexity. 2 C2H2-type zinc fingers span residues 570–594 (YVCT…MNTH) and 600–622 (FQCS…EQLH). A C2H2-type 3; degenerate zinc finger spans residues 628–650 (FACVTCNQRFARMDALNRHYKSE). The tract at residues 662 to 681 (RGIQVPPSRKTAVASTSKQK) is disordered.

It belongs to the EGR C2H2-type zinc-finger protein family. Post-translationally, phosphorylated. Dephosphorylated by calcineurin which leads to rapid translocation from the cytoplasm to the nucleus.

Its subcellular location is the nucleus. It is found in the cytoplasm. In terms of biological role, involved in the regulation of calcium ion homeostasis. Binds to the calcineurin-dependent response element. Transcriptionally regulates pmc1. In Schizosaccharomyces pombe (strain 972 / ATCC 24843) (Fission yeast), this protein is Transcriptional regulator prz1 (prz1).